Reading from the N-terminus, the 405-residue chain is Divinyl chlorophyllide a 8-vinyl-reductase, chloroplastic (405 aa).

The N-terminal 58 residues, 1–58 (MAALLLSSHLTAASSSSTTSPTARPAPSFVSFRAANAAPKGARRGWPFLASSVEPPPA), are a transit peptide targeting the chloroplast.

It is found in the plastid. It localises to the chloroplast. It carries out the reaction protochlorophyllide a + NADP(+) = 3,8-divinyl protochlorophyllide a + NADPH + H(+). The protein operates within porphyrin-containing compound metabolism; chlorophyll biosynthesis. Functionally, catalyzes the conversion of divinyl chlorophyllide to monovinyl chlorophyllide. Reduces the 8-vinyl group of the tetrapyrrole to an ethyl group using NADPH as the reductant. Can use (3,8-divinyl)-chlorophyllide a (DV-Chlidea) &gt; (3,8-divinyl)-chlorophyll a (DV-Chla) &gt; (3,8-divinyl)-protochlorophyllide a (DV-Pchlidea) &gt; (3,8-divinyl)-magnesium-protoporphyrin IX monomethyl ester (DV-MPE) &gt; (3,8-divinyl)-magnesium-protoporphyrin IX (DV-Mg-Proto) as substrates. This chain is Divinyl chlorophyllide a 8-vinyl-reductase, chloroplastic (DVR), found in Oryza sativa subsp. indica (Rice).